Here is a 203-residue protein sequence, read N- to C-terminus: Selenocysteine-containing peroxiredoxin PrxU (203 aa).

The Thioredoxin domain maps to 2 to 160 (VSVGKKAPDF…TLRQIQAFQL (159 aa)). The active site involves Sec-47. Residue Sec-47 is a non-standard amino acid, selenocysteine.

It belongs to the peroxiredoxin family. AhpC/Prx1 subfamily.

It catalyses the reaction a hydroperoxide + [thioredoxin]-dithiol = an alcohol + [thioredoxin]-disulfide + H2O. In terms of biological role, thiol-specific peroxidase that catalyzes the reduction of hydrogen peroxide and organic hydroperoxides to water and alcohols, respectively. Plays a role in cell protection against oxidative stress by detoxifying peroxides. The chain is Selenocysteine-containing peroxiredoxin PrxU from Peptoclostridium acidaminophilum (Eubacterium acidaminophilum).